Reading from the N-terminus, the 229-residue chain is MIDHQHLRLFQFCDSQFPTGAFSHSFGLETYIQRETVHDTETFIKWLHLFINEQLTYSDGIAMRIVYHALINNDKDKILDINQKLFVQNLPKETRIGAKQMGTRMVKLALDLYDSEWIQWYYNQMKNNKIKLHPAVCFTMLGHFLGVDVESIIDYYLYQNISSLTQNAVRAIPLGQTAGQQVVTEMIAHIEKTRHHILELDEIDFGMTAPGLELNQMEHENVHVRIFIS.

The protein belongs to the UreF family. In terms of assembly, ureD, UreF and UreG form a complex that acts as a GTP-hydrolysis-dependent molecular chaperone, activating the urease apoprotein by helping to assemble the nickel containing metallocenter of UreC. The UreE protein probably delivers the nickel.

The protein resides in the cytoplasm. Functionally, required for maturation of urease via the functional incorporation of the urease nickel metallocenter. The protein is Urease accessory protein UreF of Staphylococcus epidermidis (strain ATCC 35984 / DSM 28319 / BCRC 17069 / CCUG 31568 / BM 3577 / RP62A).